A 230-amino-acid chain; its full sequence is Ion-translocating oxidoreductase complex subunit E (230 aa).

Transmembrane regions (helical) follow at residues 18-38 (ALVQ…ATNA), 39-59 (LGLG…VSAL), 63-83 (TPAE…VSAV), 86-106 (LINA…PLIV), 125-145 (WLSA…MFVL), and 182-202 (PFLL…MLAV).

This sequence belongs to the NqrDE/RnfAE family. In terms of assembly, the complex is composed of six subunits: RsxA, RsxB, RsxC, RsxD, RsxE and RsxG.

The protein localises to the cell inner membrane. Its function is as follows. Part of a membrane-bound complex that couples electron transfer with translocation of ions across the membrane. Required to maintain the reduced state of SoxR. The protein is Ion-translocating oxidoreductase complex subunit E of Salmonella newport (strain SL254).